Consider the following 461-residue polypeptide: Chromosomal replication initiator protein DnaA (461 aa).

Positions 1-83 are domain I, interacts with DnaA modulators; that stretch reads MTASLWQQCL…LHFAVGRRPT (83 aa). The tract at residues 83–124 is domain II; sequence TAATVQMNTAAAPVADVRIGPAITVPSWTSKQDAMPEINHKS. The interval 125–341 is domain III, AAA+ region; sequence NINETYTFEN…GALNRVIANA (217 aa). Residues G169, G171, K172, and T173 each coordinate ATP. Residues 342-461 are domain IV, binds dsDNA; sequence RFTGKPINID…YSNLIRTLSS (120 aa).

It belongs to the DnaA family. Oligomerizes as a right-handed, spiral filament on DNA at oriC.

It is found in the cytoplasm. Functionally, plays an essential role in the initiation and regulation of chromosomal replication. ATP-DnaA binds to the origin of replication (oriC) to initiate formation of the DNA replication initiation complex once per cell cycle. Binds the DnaA box (a 9 base pair repeat at the origin) and separates the double-stranded (ds)DNA. Forms a right-handed helical filament on oriC DNA; dsDNA binds to the exterior of the filament while single-stranded (ss)DNA is stabiized in the filament's interior. The ATP-DnaA-oriC complex binds and stabilizes one strand of the AT-rich DNA unwinding element (DUE), permitting loading of DNA polymerase. After initiation quickly degrades to an ADP-DnaA complex that is not apt for DNA replication. Binds acidic phospholipids. This is Chromosomal replication initiator protein DnaA from Tolumonas auensis (strain DSM 9187 / NBRC 110442 / TA 4).